Reading from the N-terminus, the 77-residue chain is MATVIRLTRLGRKKKPFYRMVVTDSRKRRDGGWVEAIGYYNPLAETPVVKFDAERLKYWVSVGAKMSDRVATLTASK.

It belongs to the bacterial ribosomal protein bS16 family.

The chain is Small ribosomal subunit protein bS16 from Wolinella succinogenes (strain ATCC 29543 / DSM 1740 / CCUG 13145 / JCM 31913 / LMG 7466 / NCTC 11488 / FDC 602W) (Vibrio succinogenes).